A 241-amino-acid polypeptide reads, in one-letter code: Cell division cycle-associated protein 4 (241 aa).

The SERTA domain occupies 30–77; it reads YSLQRQSLLDMSLVKLQLCHMLVEPNLCRSVLIANTVRQIQEEMTQDG.

In terms of tissue distribution, highest levels of expression in the pancreas, thymus, testis, spleen, liver, placenta and leukocytes. Relatively low levels in the lung, kidney, prostate, ovary, small intestine and colon. Hardly detectable, if at all, in the brain, skeletal muscle and heart.

It is found in the nucleus. Functionally, may participate in the regulation of cell proliferation through the E2F/RB pathway. May be involved in molecular regulation of hematopoietic stem cells and progenitor cell lineage commitment and differentiation. This chain is Cell division cycle-associated protein 4 (CDCA4), found in Homo sapiens (Human).